Reading from the N-terminus, the 396-residue chain is Argininosuccinate synthase (396 aa).

ATP is bound at residue 9–17 (AYSGGLDTS). Tyr85 is an L-citrulline binding site. Gly115 contacts ATP. 3 residues coordinate L-aspartate: Thr117, Asn121, and Asp122. Asn121 lines the L-citrulline pocket. L-citrulline-binding residues include Arg125, Ser173, Glu258, and Tyr270.

It belongs to the argininosuccinate synthase family. Type 1 subfamily. In terms of assembly, homotetramer.

The protein resides in the cytoplasm. The catalysed reaction is L-citrulline + L-aspartate + ATP = 2-(N(omega)-L-arginino)succinate + AMP + diphosphate + H(+). Its pathway is amino-acid biosynthesis; L-arginine biosynthesis; L-arginine from L-ornithine and carbamoyl phosphate: step 2/3. This Streptococcus agalactiae serotype Ia (strain ATCC 27591 / A909 / CDC SS700) protein is Argininosuccinate synthase.